Consider the following 100-residue polypeptide: Urease subunit gamma (100 aa).

Belongs to the urease gamma subunit family. In terms of assembly, heterotrimer of UreA (gamma), UreB (beta) and UreC (alpha) subunits. Three heterotrimers associate to form the active enzyme.

The protein localises to the cytoplasm. The catalysed reaction is urea + 2 H2O + H(+) = hydrogencarbonate + 2 NH4(+). Its pathway is nitrogen metabolism; urea degradation; CO(2) and NH(3) from urea (urease route): step 1/1. This chain is Urease subunit gamma, found in Rhodopseudomonas palustris (strain BisA53).